The sequence spans 390 residues: Acid protease (390 aa).

The first 18 residues, 1-18 (MLFSKSLLLSVLASLSFA), serve as a signal peptide directing secretion. Residues 75 to 386 (YLTTIEIGTP…DIDNSQVGIA (312 aa)) enclose the Peptidase A1 domain. Catalysis depends on residues Asp93 and Asp282.

This sequence belongs to the peptidase A1 family.

This is Acid protease (PEP1) from Saccharomycopsis fibuligera (Yeast).